Here is a 149-residue protein sequence, read N- to C-terminus: uncharacterized protein (149 aa).

This is an uncharacterized protein from Mycoplasma pneumoniae (strain ATCC 29342 / M129 / Subtype 1) (Mycoplasmoides pneumoniae).